Reading from the N-terminus, the 404-residue chain is Short chain dehydrogenase sirR (404 aa).

The first 28 residues, 1–28, serve as a signal peptide directing secretion; it reads MHSKPQRALVIGATGVSGWSLCLQLLQT. The NADP(+) site is built by Ser-56 and Leu-58. Asn-67 and Asn-157 each carry an N-linked (GlcNAc...) asparagine glycan. Ser-237 functions as the Proton donor in the catalytic mechanism. N-linked (GlcNAc...) asparagine glycosylation occurs at Asn-274. Val-291 contributes to the NADP(+) binding site.

Belongs to the short-chain dehydrogenases/reductases (SDR) family. Highly divergent.

It participates in mycotoxin biosynthesis. In terms of biological role, short chain dehydrogenase; part of the gene cluster that mediates the biosynthesis of sirodesmin PL, an epipolythiodioxopiperazine (ETP) characterized by a disulfide bridged cyclic dipeptide and that acts as a phytotoxin which is involved in the blackleg didease of canola. SirD catalyzes the O-prenylation of L-tyrosine (L-Tyr) in the presence of dimethylallyl diphosphate (DMAPP) to yield 4-O-dimethylallyl-L-Tyr, and therefore represents probably the first pathway-specific enzyme in the biosynthesis of sirodesmin PL. 4-O-dimethylallyl-L-Tyr, then undergoes condensation with L-Ser in a reaction catalyzed by the non-ribosomal peptide synthase sirP to form the diketopiperazine (DKP) backbone. Further bishydroxylation of the DKP performed by the cytochrome P450 monooxygenase sirC leads to the production of the intermediate phomamide. This step is essential to form the reactive thiol group required for toxicity of sirodesmin PL. The next steps of sirodesmin biosynthesis are not well understood yet, but some predictions could be made from intermediate compounds identification. Phomamide is converted into phomalizarine via oxidation, probably by sirT. Further oxidation, methylation (by sirM or sirN) and reduction steps convert phomalizarine to deacetyl sirodesmin. Finally, acetyltransferase sirH probably acetylates deacetyl sirodesmin to produce sirodesmin PL. The polypeptide is Short chain dehydrogenase sirR (Leptosphaeria maculans (Blackleg fungus)).